A 156-amino-acid chain; its full sequence is Urease accessory protein UreE (156 aa).

The disordered stretch occupies residues 133 to 156 (RPESGAYGSGRTMGHDHGPFHVHA). Residues 145-156 (MGHDHGPFHVHA) show a composition bias toward basic and acidic residues.

Belongs to the UreE family.

It localises to the cytoplasm. In terms of biological role, involved in urease metallocenter assembly. Binds nickel. Probably functions as a nickel donor during metallocenter assembly. This Rhodobacter capsulatus (Rhodopseudomonas capsulata) protein is Urease accessory protein UreE.